We begin with the raw amino-acid sequence, 997 residues long: Protein translocase subunit SecA (997 aa).

ATP contacts are provided by residues Gln-84, 102 to 106 (GEGKT), and Asp-582. Positions 950–997 (PYVPVPEAKPEPSEVFGVERKRATPPPQPGLSRAERRRLMRQEKKRKK) are disordered. Residues 957–971 (AKPEPSEVFGVERKR) show a composition bias toward basic and acidic residues. Positions 984–997 (ERRRLMRQEKKRKK) are enriched in basic residues.

This sequence belongs to the SecA family. Part of the essential Sec protein translocation apparatus which comprises SecA, SecYEG and auxiliary proteins SecDF. Other proteins may also be involved. Monomer and homodimer.

It is found in the cell inner membrane. Its subcellular location is the cytoplasm. It carries out the reaction ATP + H2O + cellular proteinSide 1 = ADP + phosphate + cellular proteinSide 2.. Functionally, part of the Sec protein translocase complex. Interacts with the SecYEG preprotein conducting channel. Has a central role in coupling the hydrolysis of ATP to the transfer of proteins into and across the cell membrane, serving as an ATP-driven molecular motor driving the stepwise translocation of polypeptide chains across the membrane. The polypeptide is Protein translocase subunit SecA (Thermus thermophilus (strain ATCC 27634 / DSM 579 / HB8)).